The primary structure comprises 360 residues: Cyclin-D1-binding protein 1 (360 aa).

At Ala-2 the chain carries N-acetylalanine. Interaction with TCF3 regions lie at residues 2-184 (ASAT…VDFV) and 150-360 (ISYN…ELEL). Interaction with RPLP0 regions lie at residues 2 to 190 (ASAT…AHEE) and 240 to 360 (LIIP…ELEL). Residues 2–208 (ASATAPAAAV…DPYSGLLNDT (207 aa)) are required for interaction with CCND1.

Belongs to the CCNDBP1 family. In terms of assembly, interacts with CCND1 and GRAP2. May also interact with COPS5, RPLP0, SIRT6, SYF2 and TCF3. Post-translationally, phosphorylated. As to expression, ubiquitously expressed. Expression is down-regulated in a variety of tumor types including breast, colon, prostate and rectal tumors, and is up-regulated in certain hepatic carcinomas.

It is found in the cytoplasm. The protein resides in the nucleus. Functionally, may negatively regulate cell cycle progression. May act at least in part via inhibition of the cyclin-D1/CDK4 complex, thereby preventing phosphorylation of RB1 and blocking E2F-dependent transcription. The polypeptide is Cyclin-D1-binding protein 1 (CCNDBP1) (Homo sapiens (Human)).